We begin with the raw amino-acid sequence, 301 residues long: UDP-N-acetylenolpyruvoylglucosamine reductase (301 aa).

Residues 26 to 193 enclose the FAD-binding PCMH-type domain; it reads KTGGPAQYLA…VSATFGLEPG (168 aa). The active site involves Arg-172. The active-site Proton donor is the Ser-222. Residue Glu-292 is part of the active site.

Belongs to the MurB family. Requires FAD as cofactor.

It localises to the cytoplasm. It catalyses the reaction UDP-N-acetyl-alpha-D-muramate + NADP(+) = UDP-N-acetyl-3-O-(1-carboxyvinyl)-alpha-D-glucosamine + NADPH + H(+). The protein operates within cell wall biogenesis; peptidoglycan biosynthesis. Functionally, cell wall formation. This is UDP-N-acetylenolpyruvoylglucosamine reductase from Lactobacillus johnsonii (strain CNCM I-12250 / La1 / NCC 533).